The chain runs to 240 residues: Regulatory protein HlyX (240 aa).

Residues 15-28 (CTIHCQNCSISQLC) are essential for the oxygen-regulated activity. The HTH crp-type domain maps to 163–236 (MSAEEKLAAF…GKYITINRMD (74 aa)). Positions 196-215 (RGDIGNYLGLTIETISRLLG) form a DNA-binding region, H-T-H motif.

It localises to the cytoplasm. Functionally, confers a hemolytic phenotype on E.coli. May regulate, rather than mediate, hemolytic activity. In Actinobacillus pleuropneumoniae (Haemophilus pleuropneumoniae), this protein is Regulatory protein HlyX (hlyX).